The chain runs to 288 residues: Nucleotide-binding protein APP7_0339 (288 aa).

8 to 15 (GRSGSGKS) is a binding site for ATP. A GTP-binding site is contributed by 56–59 (DIRN).

Belongs to the RapZ-like family.

In terms of biological role, displays ATPase and GTPase activities. This Actinobacillus pleuropneumoniae serotype 7 (strain AP76) protein is Nucleotide-binding protein APP7_0339.